Reading from the N-terminus, the 230-residue chain is Thiamine-triphosphatase (230 aa).

An N-acetylalanine modification is found at A2. In terms of domain architecture, CYTH spans 5–201 (LIEVERKFLP…AKLIVYLQRF (197 aa)). 2 residues coordinate Mg(2+): E7 and E9. Residues K11, R55, R57, K65, and R125 each contribute to the substrate site. The Mg(2+) site is built by D145, E157, and E159. E157 lines the substrate pocket. K193 is a binding site for substrate.

This sequence belongs to the ThTPase family. As to quaternary structure, monomer. Mg(2+) serves as cofactor.

It localises to the cytoplasm. The enzyme catalyses thiamine triphosphate + H2O = thiamine diphosphate + phosphate + H(+). In terms of biological role, hydrolase highly specific for thiamine triphosphate (ThTP). The polypeptide is Thiamine-triphosphatase (THTPA) (Macaca fascicularis (Crab-eating macaque)).